Reading from the N-terminus, the 91-residue chain is MANKQDLIAKVAEATELTKKDSAAAVDAVFASIEEFLAAGEKVQLIGFGNFEVRERAARQGRNPQTGETISIAASKVPAFKAGKALKDAVK.

It belongs to the bacterial histone-like protein family. Homodimer.

In terms of biological role, histone-like DNA-binding protein which is capable of wrapping DNA to stabilize it, and thus to prevent its denaturation under extreme environmental conditions. The polypeptide is DNA-binding protein HU (hup) (Streptococcus thermophilus).